Consider the following 641-residue polypeptide: 1-deoxy-D-xylulose-5-phosphate synthase (641 aa).

Thiamine diphosphate contacts are provided by residues His71 and 112–114 (SHA). Residue Asp144 coordinates Mg(2+). Residues 145 to 146 (GA), Asn174, Tyr285, and Glu366 each bind thiamine diphosphate. Position 174 (Asn174) interacts with Mg(2+).

It belongs to the transketolase family. DXPS subfamily. As to quaternary structure, homodimer. The cofactor is Mg(2+). It depends on thiamine diphosphate as a cofactor.

It carries out the reaction D-glyceraldehyde 3-phosphate + pyruvate + H(+) = 1-deoxy-D-xylulose 5-phosphate + CO2. The protein operates within metabolic intermediate biosynthesis; 1-deoxy-D-xylulose 5-phosphate biosynthesis; 1-deoxy-D-xylulose 5-phosphate from D-glyceraldehyde 3-phosphate and pyruvate: step 1/1. Catalyzes the acyloin condensation reaction between C atoms 2 and 3 of pyruvate and glyceraldehyde 3-phosphate to yield 1-deoxy-D-xylulose-5-phosphate (DXP). This chain is 1-deoxy-D-xylulose-5-phosphate synthase, found in Mycobacteroides abscessus (strain ATCC 19977 / DSM 44196 / CCUG 20993 / CIP 104536 / JCM 13569 / NCTC 13031 / TMC 1543 / L948) (Mycobacterium abscessus).